Reading from the N-terminus, the 738-residue chain is RNA polymerase II degradation factor 1 (738 aa).

The 43-residue stretch at 21–63 (ALKSKIDTLTELFPDWTSDDLIDIVQEYDDLETIIDKITSGAV) folds into the CUE domain. A compositionally biased stretch (basic and acidic residues) spans 69–84 (VKKPAKKEKYEKKEQQ). 3 disordered regions span residues 69 to 455 (VKKP…QQQQ), 467 to 503 (YLSQQQQYAQQQQQHPQPQSQQPQSQQSPQSQKQGNN), and 640 to 688 (NGQE…QPVN). Residues 103–121 (KSSNNSNSFTSTKHNSSNN) show a composition bias toward low complexity. The span at 211–220 (HNNKEEHKQI) shows a compositional bias: basic and acidic residues. Residues 224 to 237 (SLSSKKTTSRTSAS) show a composition bias toward low complexity. A compositionally biased stretch (basic and acidic residues) spans 256–291 (KKTESPLENVAELKKEISDIKKDDQKSEASEEKVNE). A phosphoserine mark is found at S260, S273, and S307. Acidic residues-rich tracts occupy residues 298 to 328 (EQEEETAEPSEENEDRVPEVDGEEVQEEAEE) and 337 to 358 (QTAEELEQEQDNVAAPEEEVTV). T338 bears the Phosphothreonine mark. 2 stretches are compositionally biased toward low complexity: residues 380–455 (VPQP…QQQQ) and 467–498 (YLSQQQQYAQQQQQHPQPQSQQPQSQQSPQSQ). A contains the proteolytic activation cleavage site region spans residues 500 to 530 (QGNNVAAQQYYMYQNQFPGYSYPGMFDSQGY). Residue S646 is modified to Phosphoserine. Low complexity predominate over residues 660-688 (QKQSQQQQQQQPQGQPQPEVQMQNGQPVN).

The protein belongs to the DEF1 family. Homodimer; may form higher order oligomers. Interacts with the large RNA polymerase II subunit RPO21; the interaction is direct and serves to bridge RPO21 to the Elongin complex in a manner dependent on transcription stress. Interacts with RAD26. In terms of processing, ubiquitinated. Proteolytically cleaved by the proteasome in response to transcription stress; the resulting N-terminal form constitutes the activated nuclear form and the C-terminal portion is degraded.

The protein resides in the cytoplasm. It is found in the nucleus. It localises to the chromosome. Its subcellular location is the telomere. In terms of biological role, recruits the ubiquitination machinery to RNA polymerase II for polyubiquitination, removal and degradation, when the transcription-coupled repair (TCR) factor RAD26 fails to efficiently displace stalled RNA polymerase II. Also involved in telomere length regulation. Binds DNA. This is RNA polymerase II degradation factor 1 (DEF1) from Saccharomyces cerevisiae (strain JAY291) (Baker's yeast).